The chain runs to 137 residues: Nucleoside diphosphate kinase (137 aa).

6 residues coordinate ATP: Lys-9, Phe-57, Arg-85, Thr-91, Arg-102, and Asn-112. The active-site Pros-phosphohistidine intermediate is the His-115.

The protein belongs to the NDK family. Homotetramer. The cofactor is Mg(2+).

It localises to the cytoplasm. It catalyses the reaction a 2'-deoxyribonucleoside 5'-diphosphate + ATP = a 2'-deoxyribonucleoside 5'-triphosphate + ADP. The catalysed reaction is a ribonucleoside 5'-diphosphate + ATP = a ribonucleoside 5'-triphosphate + ADP. Its function is as follows. Major role in the synthesis of nucleoside triphosphates other than ATP. The ATP gamma phosphate is transferred to the NDP beta phosphate via a ping-pong mechanism, using a phosphorylated active-site intermediate. The sequence is that of Nucleoside diphosphate kinase from Syntrophotalea carbinolica (strain DSM 2380 / NBRC 103641 / GraBd1) (Pelobacter carbinolicus).